The chain runs to 89 residues: Small ribosomal subunit protein uS14 (89 aa).

This sequence belongs to the universal ribosomal protein uS14 family. In terms of assembly, part of the 30S ribosomal subunit. Contacts proteins S3 and S10.

Its function is as follows. Binds 16S rRNA, required for the assembly of 30S particles and may also be responsible for determining the conformation of the 16S rRNA at the A site. The sequence is that of Small ribosomal subunit protein uS14 from Parabacteroides distasonis (strain ATCC 8503 / DSM 20701 / CIP 104284 / JCM 5825 / NCTC 11152).